The following is a 206-amino-acid chain: Small ribosomal subunit protein uS4 (206 aa).

One can recognise an S4 RNA-binding domain in the interval 98-176 (RRLDNVVYRL…APKWLEANRE (79 aa)).

Belongs to the universal ribosomal protein uS4 family. In terms of assembly, part of the 30S ribosomal subunit. Contacts protein S5. The interaction surface between S4 and S5 is involved in control of translational fidelity.

Functionally, one of the primary rRNA binding proteins, it binds directly to 16S rRNA where it nucleates assembly of the body of the 30S subunit. In terms of biological role, with S5 and S12 plays an important role in translational accuracy. The protein is Small ribosomal subunit protein uS4 of Gloeobacter violaceus (strain ATCC 29082 / PCC 7421).